The sequence spans 215 residues: Adenylate kinase (215 aa).

10-15 (GAGKGT) contributes to the ATP binding site. An NMP region spans residues 30 to 59 (STGDMLRAAVKAGTELGLKAKSVMDAGGLV). AMP contacts are provided by residues threonine 31, arginine 36, 57 to 59 (GLV), 85 to 88 (GFPR), and glutamine 92. An LID region spans residues 122 to 159 (GRRVHPASGRVYHTEYNPPKVAGKDDVSGEELVQREDD). Residues arginine 123 and 132–133 (VY) each bind ATP. The AMP site is built by arginine 156 and arginine 167. Glycine 201 contributes to the ATP binding site.

The protein belongs to the adenylate kinase family. As to quaternary structure, monomer.

The protein resides in the cytoplasm. It catalyses the reaction AMP + ATP = 2 ADP. The protein operates within purine metabolism; AMP biosynthesis via salvage pathway; AMP from ADP: step 1/1. Catalyzes the reversible transfer of the terminal phosphate group between ATP and AMP. Plays an important role in cellular energy homeostasis and in adenine nucleotide metabolism. The polypeptide is Adenylate kinase (Ectopseudomonas mendocina (strain ymp) (Pseudomonas mendocina)).